Reading from the N-terminus, the 549-residue chain is Glucose-6-phosphate isomerase (549 aa).

The active-site Proton donor is the glutamate 355. Catalysis depends on residues histidine 386 and lysine 514.

This sequence belongs to the GPI family.

It localises to the cytoplasm. It carries out the reaction alpha-D-glucose 6-phosphate = beta-D-fructose 6-phosphate. It participates in carbohydrate biosynthesis; gluconeogenesis. It functions in the pathway carbohydrate degradation; glycolysis; D-glyceraldehyde 3-phosphate and glycerone phosphate from D-glucose: step 2/4. In terms of biological role, catalyzes the reversible isomerization of glucose-6-phosphate to fructose-6-phosphate. The polypeptide is Glucose-6-phosphate isomerase (Salmonella paratyphi B (strain ATCC BAA-1250 / SPB7)).